The primary structure comprises 405 residues: mRNA cap guanine-N(7) methyltransferase (405 aa).

Residues 1-78 are disordered; sequence MDNILNPEDN…PRLEEGHGSL (78 aa). Composition is skewed to polar residues over residues 9–18 and 36–45; these read DNVSQTNTET and KFTASGQNLD. Positions 58–75 are enriched in basic and acidic residues; it reads KAGEPESPSKRPRLEEGH. The mRNA cap 0 methyltransferase domain maps to 97-404; that stretch reads SRIFHLRNFN…IYLLFAFEKQ (308 aa). Residue 106–107 coordinates mRNA; it reads NN. Positions 110, 134, 156, 190, 213, and 218 each coordinate S-adenosyl-L-methionine.

This sequence belongs to the class I-like SAM-binding methyltransferase superfamily. mRNA cap 0 methyltransferase family.

It is found in the nucleus. The catalysed reaction is a 5'-end (5'-triphosphoguanosine)-ribonucleoside in mRNA + S-adenosyl-L-methionine = a 5'-end (N(7)-methyl 5'-triphosphoguanosine)-ribonucleoside in mRNA + S-adenosyl-L-homocysteine. Functionally, catalytic subunit of the mRNA-capping methyltransferase RNMT:RAMAC complex that methylates the N7 position of the added guanosine to the 5'-cap structure of mRNAs. Binds RNA containing 5'-terminal GpppC. The sequence is that of mRNA cap guanine-N(7) methyltransferase (rnmt) from Xenopus tropicalis (Western clawed frog).